Reading from the N-terminus, the 161-residue chain is Large ribosomal subunit protein bL17 (161 aa).

The tract at residues 126 to 161 (KVAKKATRTRRSKKTTEAAPAAEVPATEEPKAESAE) is disordered. Residues 129–138 (KKATRTRRSK) are compositionally biased toward basic residues. A compositionally biased stretch (low complexity) spans 142-152 (EAAPAAEVPAT).

Belongs to the bacterial ribosomal protein bL17 family. As to quaternary structure, part of the 50S ribosomal subunit. Contacts protein L32.

This chain is Large ribosomal subunit protein bL17, found in Bacteroides fragilis (strain ATCC 25285 / DSM 2151 / CCUG 4856 / JCM 11019 / LMG 10263 / NCTC 9343 / Onslow / VPI 2553 / EN-2).